Consider the following 353-residue polypeptide: Probable protein phosphatase 2C 48 (353 aa).

The region spanning 54–348 (FAAVCSRRGE…DDCSAICLFF (295 aa)) is the PPM-type phosphatase domain. Asp90, Gly91, Asp293, and Asp339 together coordinate Mn(2+).

The protein belongs to the PP2C family. It depends on Mg(2+) as a cofactor. Mn(2+) is required as a cofactor.

The enzyme catalyses O-phospho-L-seryl-[protein] + H2O = L-seryl-[protein] + phosphate. It catalyses the reaction O-phospho-L-threonyl-[protein] + H2O = L-threonyl-[protein] + phosphate. This chain is Probable protein phosphatase 2C 48, found in Oryza sativa subsp. japonica (Rice).